The sequence spans 83 residues: Large ribosomal subunit protein bL31B (83 aa).

The protein belongs to the bacterial ribosomal protein bL31 family. Type B subfamily. Part of the 50S ribosomal subunit.

This Tropheryma whipplei (strain TW08/27) (Whipple's bacillus) protein is Large ribosomal subunit protein bL31B.